We begin with the raw amino-acid sequence, 297 residues long: Ectoine dioxygenase (297 aa).

Glutamine 131 is a binding site for L-ectoine. Position 137 (lysine 137) interacts with 2-oxoglutarate. Fe cation contacts are provided by histidine 148, aspartate 150, and histidine 249.

Belongs to the PhyH family. EctD subfamily. As to quaternary structure, homodimer. Fe(2+) serves as cofactor.

The enzyme catalyses L-ectoine + 2-oxoglutarate + O2 = 5-hydroxyectoine + succinate + CO2. Involved in the biosynthesis of 5-hydroxyectoine, called compatible solute, which helps organisms to survive extreme osmotic stress by acting as a highly soluble organic osmolyte. Catalyzes the 2-oxoglutarate-dependent selective hydroxylation of L-ectoine to yield (4S,5S)-5-hydroxyectoine. The protein is Ectoine dioxygenase of Streptomyces anulatus (Streptomyces chrysomallus).